We begin with the raw amino-acid sequence, 402 residues long: Transcription regulatory protein OpdE (402 aa).

12 consecutive transmembrane segments (helical) span residues 22 to 42 (VLAIAVCAFALVASEFLPVSL), 60 to 80 (GIAISGAFAVLTSLFISSVAG), 86 to 106 (TLLLGLTAAMGMSGAIVALAP), 108 to 128 (YFVYMLGRALIGIVIGGFWSM), 147 to 167 (ALVNGGNALATVVAAPLGAWL), 170 to 190 (LIGWRGAFLCLVPVALVALAW), 220 to 240 (PGVMLGMLASSLFFMGQFSLF), 256 to 276 (AHVSLVLLVIGAAGFIGTLLI), 296 to 316 (ALIALVLTVLGGWPAIVVVLL), 318 to 338 (LWGLTGTSAPVGWWAWIARVF), 348 to 368 (LFVAVVQLSIALGSTLGGLLF), and 375 to 395 (ATFFASAAMLLIAAFLTILTA).

To B.subtilis YwfA.

The protein resides in the cell membrane. In terms of biological role, regulates the expression of oprD which encodes the imipenem-specific porin. This is Transcription regulatory protein OpdE (opdE) from Pseudomonas aeruginosa (strain ATCC 15692 / DSM 22644 / CIP 104116 / JCM 14847 / LMG 12228 / 1C / PRS 101 / PAO1).